A 110-amino-acid chain; its full sequence is Protein YcgL (110 aa).

One can recognise a YcgL domain in the interval 14-98 (MFCVIYRSSK…PPEDLLKQHL (85 aa)). The segment at 88-110 (PPPEDLLKQHLSSVGQNTSHADR) is disordered. A compositionally biased stretch (polar residues) spans 97–110 (HLSSVGQNTSHADR).

This Salmonella schwarzengrund (strain CVM19633) protein is Protein YcgL.